The chain runs to 72 residues: Gas vesicle protein A (72 aa).

Belongs to the gas vesicle GvpA family. In terms of assembly, the gas vesicle shell is 2 nm thick and consists of a single layer of this protein. It forms helical ribs nearly perpendicular to the long axis of the vesicle.

It is found in the gas vesicle shell. Gas vesicles are hollow, gas filled proteinaceous nanostructures found in some microorganisms. During planktonic growth they allow positioning of the organism at a favorable depth for light or nutrient acquisition. GvpA forms the protein shell. This Geotalea uraniireducens (strain Rf4) (Geobacter uraniireducens) protein is Gas vesicle protein A.